Here is a 364-residue protein sequence, read N- to C-terminus: tRNA 2-selenouridine synthase (364 aa).

The region spanning 14-137 is the Rhodanese domain; it reads LLADTPLIDV…LRQTAIQATW (124 aa). Cysteine 97 acts as the S-selanylcysteine intermediate in catalysis. A (2E)-geranyl diphosphate-binding site is contributed by glycine 149.

The protein belongs to the SelU family. In terms of assembly, monomer.

It carries out the reaction 5-methylaminomethyl-2-thiouridine(34) in tRNA + selenophosphate + (2E)-geranyl diphosphate + H2O + H(+) = 5-methylaminomethyl-2-selenouridine(34) in tRNA + (2E)-thiogeraniol + phosphate + diphosphate. It catalyses the reaction 5-methylaminomethyl-2-thiouridine(34) in tRNA + (2E)-geranyl diphosphate = 5-methylaminomethyl-S-(2E)-geranyl-thiouridine(34) in tRNA + diphosphate. The enzyme catalyses 5-methylaminomethyl-S-(2E)-geranyl-thiouridine(34) in tRNA + selenophosphate + H(+) = 5-methylaminomethyl-2-(Se-phospho)selenouridine(34) in tRNA + (2E)-thiogeraniol. The catalysed reaction is 5-methylaminomethyl-2-(Se-phospho)selenouridine(34) in tRNA + H2O = 5-methylaminomethyl-2-selenouridine(34) in tRNA + phosphate. Involved in the post-transcriptional modification of the uridine at the wobble position (U34) of tRNA(Lys), tRNA(Glu) and tRNA(Gln). Catalyzes the conversion of 2-thiouridine (S2U-RNA) to 2-selenouridine (Se2U-RNA). Acts in a two-step process involving geranylation of 2-thiouridine (S2U) to S-geranyl-2-thiouridine (geS2U) and subsequent selenation of the latter derivative to 2-selenouridine (Se2U) in the tRNA chain. The sequence is that of tRNA 2-selenouridine synthase from Salmonella typhimurium (strain LT2 / SGSC1412 / ATCC 700720).